The following is a 238-amino-acid chain: Probable septum site-determining protein MinC (238 aa).

Belongs to the MinC family. Interacts with MinD and FtsZ.

Its function is as follows. Cell division inhibitor that blocks the formation of polar Z ring septums. Rapidly oscillates between the poles of the cell to destabilize FtsZ filaments that have formed before they mature into polar Z rings. Prevents FtsZ polymerization. This Xylella fastidiosa (strain M23) protein is Probable septum site-determining protein MinC.